The primary structure comprises 375 residues: MDNSSRLFSPLRLGKCQLRHRVAMSPLTRFRADDLSVQMPFAKEYYAQRASVPGTFLVSEATSISRESVGFSNVPGIWNAEQVRAWKEIADDVHCKGSFLFLQLWATGRSATPERLQSGDFDFASSSAVPMEPGGAVPRELTEEDIHDLIARFAEAARRAIDAGMDGIELHAANGYLIDQFTQASCNQRTDRWGGSIENRARFAIEVTRSVVAAVGADRVGVKLSPWGKIQGMGTMQDLVPQFQYLVSELRDMGLAYLRLSNSRWIDGVPQEEEDNSIYVHTWGASRPVLLEGGYDPISAQKEADIRFNGYDAVIAFGRFFISNPDLPFRIKAGVDLQKYNRDTFYTPISEKGYIDYPFSTAFLEEHSSKASLKL.

Positions 61, 103, and 171 each coordinate FMN. Catalysis depends on tyrosine 176, which acts as the Proton donor. FMN contacts are provided by lysine 223, glycine 294, and arginine 319.

Belongs to the NADH:flavin oxidoreductase/NADH oxidase family. FMN serves as cofactor.

The catalysed reaction is (1S,4S)-4-[(4-hydroxyphenyl)methyl]-2,5-diazaspiro[bicyclo[3.2.1]octane-6,1'-cyclohexane]-2',5'-dien-4'-one + 2 NADPH + 2 H(+) = (1S,4S)-4-[(4-hydroxyphenyl)methyl]-2,5-diazaspiro[bicyclo[3.2.1]octane-6,1'-cyclohexan]-4'-one + 2 NADP(+). The protein operates within alkaloid biosynthesis; ergot alkaloid biosynthesis. Its function is as follows. Aldehyde reductase; part of the gene cluster that mediates the biosynthesis of the alkaloid (-)-FR901483, a potent immunosuppressant that shows efficacy in animal models and a probable inhibitor of purine nucleotide biosynthesis by targeting phosphoribosylpyrophosphate amidotransferase (PPAT). Within the pathway, FrzD reduces the dienone portion of the pathway intermediates to cyclohexanone. The biosynthesis of (-)-FR901483 starts with the condensation of two L-tyrosines to yield (S,S)-dityrosyl-piperazine. This process occurs in 3 steps with the non-canonical nonribosomal peptide synthetase FrzA catalyzing the reduction of L-tyrosine into L-tyrosinal, the spontaneous condensation of 2 L-tyrosinal units, and the subsequent reduction by the NmrA-like family domain-containing oxidoreductase FrzB. The cytochrome P450 monooxygenase FrzC then performs coupling between N10 and C1' to morph the piperazine into a 1,4-diazabicyclo[3.2.1]octane spiro-fused to a 2,5-cyclohexadienone. The dienone portion is further reduced to cyclohexanone by the flavin-dependent reductase FrzD. The methyltranserases (MTs) FrzE and FrzF are then involved in the methylation at the C10' amine and the C4 phenolic oxygen, respectively. The order of the two MTs appear to be interchangeable. Cleavage of the C9-N10' bond by the dioxygenase FrzG then leads to formation of a conjugated iminium. In addition to the oxidation of C9, an additional dehydrogenation between C7 and C8 can occur to give a likely shunt product. The next biosynthetic step is the intramolecular aldol condensation catalyzed by the newly identified aldolase FrzH to yield an aza-tricyclic product with the formation of a C9-C3' bond. The short-chain dehydrogenase/reductase FrzI then produces dephospho-(-)-FR901483 that is phosphorylated at C4'-OH into (-)-FR901483 by the phosphotransferase FrzJ. The only unassigned enzyme in the cluster is the second cytochrome P450 monooxygenase FrzL. This Cladobotryum sp protein is Aldehyde reductase FrzD.